The primary structure comprises 67 residues: Ferredoxin (67 aa).

2 4Fe-4S ferredoxin-type domains span residues 3–31 and 36–67; these read WKVSVDQDTCIGDAICASLCPDVFEMNDE and PKVEVIEDEELYNCAKEAMEACPVSAITIEEA. Residues C12, D15, and C18 each coordinate [4Fe-4S] cluster. C22 and C49 are joined by a disulfide. C57 serves as a coordination point for [4Fe-4S] cluster.

Homodimer. The cofactor is [4Fe-4S] cluster. It depends on [3Fe-4S] cluster as a cofactor.

Its function is as follows. Ferredoxins are iron-sulfur proteins that transfer electrons in a wide variety of metabolic reactions. The chain is Ferredoxin (fdxA) from Pyrococcus furiosus (strain ATCC 43587 / DSM 3638 / JCM 8422 / Vc1).